A 367-amino-acid chain; its full sequence is MSLSRVSVTGVRNLHPVTLSPSPRINILYGANGSGKTSVLEAIHLLGIARSFRSSRLLPVIQYVQPSCTVFGQVDLAQGGHSNLGVSRDRQGEFQIRIDGQNARSAAQLAEILPLQLINPDSFRLLEGAPKIRRQFLDWGVFHVEPRFMVTWQRLQKALKQRNSWLRHGTLDAASQAAWDRELCYASDEIDEFRRAYIKALKPVFEQTLSELVELEGLTLSYYRGWDKEKELSTVLASSLHRDQQMGHTQAGPQRADLRLRLGAHNAADILSRGQQKLVVCALRIAQGHLVSQVRRGQCIYLVDDLPSELDDNHRRALCRLLEELRCQVFITCVDQEFLREGWQTETPVALFHVEQGRITQTHDHRE.

30-37 provides a ligand contact to ATP; that stretch reads GANGSGKT.

It belongs to the RecF family.

It localises to the cytoplasm. The RecF protein is involved in DNA metabolism; it is required for DNA replication and normal SOS inducibility. RecF binds preferentially to single-stranded, linear DNA. It also seems to bind ATP. In Pseudomonas savastanoi pv. phaseolicola (strain 1448A / Race 6) (Pseudomonas syringae pv. phaseolicola (strain 1448A / Race 6)), this protein is DNA replication and repair protein RecF.